The sequence spans 345 residues: Sesquiterpene synthase PILCRDRAFT_825684 (345 aa).

Mg(2+)-binding residues include D91, N226, S230, and E234. Residues 91–95 (DELTD) carry the DDXXD motif motif. (2E,6E)-farnesyl diphosphate-binding residues include R316 and Y317.

It belongs to the terpene synthase family. Mg(2+) is required as a cofactor.

It carries out the reaction (2E,6E)-farnesyl diphosphate = viridiflorene + diphosphate. Terpene cyclase that catalyzes the cyclization of farnesyl diphosphate (FPP) to various sesquiterpenes, including beta-elemene, viridiflorene and gamma-cadinene. Gamma-cadinene is the major product of PILCRDRAFT_825684. This chain is Sesquiterpene synthase PILCRDRAFT_825684, found in Piloderma croceum (strain F 1598).